Here is a 102-residue protein sequence, read N- to C-terminus: CRISPR-associated endoribonuclease Cas2 (102 aa).

D8 contacts Mg(2+).

It belongs to the CRISPR-associated endoribonuclease Cas2 protein family. As to quaternary structure, homodimer, forms a heterotetramer with a Cas1 homodimer. Requires Mg(2+) as cofactor.

In terms of biological role, CRISPR (clustered regularly interspaced short palindromic repeat), is an adaptive immune system that provides protection against mobile genetic elements (viruses, transposable elements and conjugative plasmids). CRISPR clusters contain sequences complementary to antecedent mobile elements and target invading nucleic acids. CRISPR clusters are transcribed and processed into CRISPR RNA (crRNA). Functions as a ssRNA-specific endoribonuclease. Involved in the integration of spacer DNA into the CRISPR cassette. The protein is CRISPR-associated endoribonuclease Cas2 of Acidovorax ebreus (strain TPSY) (Diaphorobacter sp. (strain TPSY)).